A 371-amino-acid polypeptide reads, in one-letter code: Peptide chain release factor 2 (371 aa).

Gln-252 is modified (N5-methylglutamine).

Belongs to the prokaryotic/mitochondrial release factor family. In terms of processing, methylated by PrmC. Methylation increases the termination efficiency of RF2.

Its subcellular location is the cytoplasm. Functionally, peptide chain release factor 2 directs the termination of translation in response to the peptide chain termination codons UGA and UAA. The polypeptide is Peptide chain release factor 2 (Staphylococcus haemolyticus (strain JCSC1435)).